Here is a 163-residue protein sequence, read N- to C-terminus: Ribosome maturation factor RimM (163 aa).

In terms of domain architecture, PRC barrel spans 94-162; the sequence is ADEYYYIDLI…DHLVIAADFI (69 aa).

This sequence belongs to the RimM family. Binds ribosomal protein uS19.

Its subcellular location is the cytoplasm. In terms of biological role, an accessory protein needed during the final step in the assembly of 30S ribosomal subunit, possibly for assembly of the head region. Essential for efficient processing of 16S rRNA. May be needed both before and after RbfA during the maturation of 16S rRNA. It has affinity for free ribosomal 30S subunits but not for 70S ribosomes. The protein is Ribosome maturation factor RimM of Zymomonas mobilis subsp. mobilis (strain ATCC 31821 / ZM4 / CP4).